The chain runs to 101 residues: Small ribosomal subunit protein uS14 (101 aa).

This sequence belongs to the universal ribosomal protein uS14 family. Part of the 30S ribosomal subunit. Contacts proteins S3 and S10.

Functionally, binds 16S rRNA, required for the assembly of 30S particles and may also be responsible for determining the conformation of the 16S rRNA at the A site. The sequence is that of Small ribosomal subunit protein uS14 from Vibrio campbellii (strain ATCC BAA-1116).